Reading from the N-terminus, the 338-residue chain is Anthranilate phosphoribosyltransferase (338 aa).

5-phospho-alpha-D-ribose 1-diphosphate contacts are provided by residues G81, 84–85, S89, 91–94, 109–117, and A121; these read GD, NVST, and KHGNRALSS. G81 is a binding site for anthranilate. S93 contacts Mg(2+). N112 is a binding site for anthranilate. R167 is a binding site for anthranilate. Positions 226 and 227 each coordinate Mg(2+).

The protein belongs to the anthranilate phosphoribosyltransferase family. Homodimer. Mg(2+) is required as a cofactor.

The catalysed reaction is N-(5-phospho-beta-D-ribosyl)anthranilate + diphosphate = 5-phospho-alpha-D-ribose 1-diphosphate + anthranilate. The protein operates within amino-acid biosynthesis; L-tryptophan biosynthesis; L-tryptophan from chorismate: step 2/5. Functionally, catalyzes the transfer of the phosphoribosyl group of 5-phosphorylribose-1-pyrophosphate (PRPP) to anthranilate to yield N-(5'-phosphoribosyl)-anthranilate (PRA). This Rhodopseudomonas palustris (strain BisB5) protein is Anthranilate phosphoribosyltransferase.